Reading from the N-terminus, the 205-residue chain is Type-4 uracil-DNA glycosylase (205 aa).

Residues cysteine 13 and cysteine 16 each contribute to the [4Fe-4S] cluster site. Uracil is bound by residues glycine 40–glycine 42, phenylalanine 54, and asparagine 80. Residues cysteine 84 and cysteine 100 each contribute to the [4Fe-4S] cluster site. Residue histidine 155 coordinates uracil.

It belongs to the uracil-DNA glycosylase (UDG) superfamily. Type 4 (UDGa) family. As to quaternary structure, monomer.

The enzyme catalyses Hydrolyzes single-stranded DNA or mismatched double-stranded DNA and polynucleotides, releasing free uracil.. With respect to regulation, product-inhibited by apurinic/apyrimidinic sites. In terms of biological role, removes uracil bases that are present in DNA as a result of either deamination of cytosine or misincorporation of dUMP instead of dTMP. Can remove uracil from double-stranded DNA containing either a U/G, U/A, U/C or U/T base pair as well as from single-stranded DNA. Specifically recognizes uracil that is flipped out from double-stranded DNA. This Thermus thermophilus (strain ATCC 27634 / DSM 579 / HB8) protein is Type-4 uracil-DNA glycosylase.